The primary structure comprises 358 residues: Nicotinate-nucleotide--dimethylbenzimidazole phosphoribosyltransferase (358 aa).

Residue Glu313 is the Proton acceptor of the active site.

Belongs to the CobT family.

It carries out the reaction 5,6-dimethylbenzimidazole + nicotinate beta-D-ribonucleotide = alpha-ribazole 5'-phosphate + nicotinate + H(+). It functions in the pathway nucleoside biosynthesis; alpha-ribazole biosynthesis; alpha-ribazole from 5,6-dimethylbenzimidazole: step 1/2. Catalyzes the synthesis of alpha-ribazole-5'-phosphate from nicotinate mononucleotide (NAMN) and 5,6-dimethylbenzimidazole (DMB). The sequence is that of Nicotinate-nucleotide--dimethylbenzimidazole phosphoribosyltransferase from Corynebacterium glutamicum (strain ATCC 13032 / DSM 20300 / JCM 1318 / BCRC 11384 / CCUG 27702 / LMG 3730 / NBRC 12168 / NCIMB 10025 / NRRL B-2784 / 534).